The sequence spans 702 residues: Polyribonucleotide nucleotidyltransferase (702 aa).

Aspartate 485 and aspartate 491 together coordinate Mg(2+). In terms of domain architecture, KH spans 552 to 612; that stretch reads PRTEIICIDP…EGVKKAISII (61 aa). One can recognise an S1 motif domain in the interval 622 to 690; that stretch reads GEIYLGKVTK…NQGRINLSRK (69 aa).

Belongs to the polyribonucleotide nucleotidyltransferase family. The cofactor is Mg(2+).

The protein localises to the cytoplasm. It carries out the reaction RNA(n+1) + phosphate = RNA(n) + a ribonucleoside 5'-diphosphate. Functionally, involved in mRNA degradation. Catalyzes the phosphorolysis of single-stranded polyribonucleotides processively in the 3'- to 5'-direction. The protein is Polyribonucleotide nucleotidyltransferase of Clostridium botulinum (strain ATCC 19397 / Type A).